The chain runs to 705 residues: Elongation factor G (705 aa).

The 283-residue stretch at 8 to 290 (HRYRNIGIMA…GVIHLLPSPA (283 aa)) folds into the tr-type G domain. GTP contacts are provided by residues 17 to 24 (AHIDAGKT), 88 to 92 (DTPGH), and 142 to 145 (NKMD).

Belongs to the TRAFAC class translation factor GTPase superfamily. Classic translation factor GTPase family. EF-G/EF-2 subfamily.

It is found in the cytoplasm. Catalyzes the GTP-dependent ribosomal translocation step during translation elongation. During this step, the ribosome changes from the pre-translocational (PRE) to the post-translocational (POST) state as the newly formed A-site-bound peptidyl-tRNA and P-site-bound deacylated tRNA move to the P and E sites, respectively. Catalyzes the coordinated movement of the two tRNA molecules, the mRNA and conformational changes in the ribosome. The chain is Elongation factor G from Xylella fastidiosa (strain M12).